We begin with the raw amino-acid sequence, 1009 residues long: Type VII secretion system accessory factor EsaA (1009 aa).

A run of 6 helical transmembrane segments spans residues Ile-7–Val-27, Ile-822–Phe-842, Ala-869–Ile-889, Lys-903–Leu-923, Ser-928–Leu-948, and Ile-979–Phe-999.

It belongs to the EsaA family. As to quaternary structure, homodimer. Interacts with EssB.

It localises to the cell membrane. In terms of biological role, component of the type VII secretion system (Ess). Provides together with EssB and other components such as EssC and EssE a secretion platform across the cytoplasmic membrane in the host. The chain is Type VII secretion system accessory factor EsaA from Staphylococcus aureus (strain MRSA252).